The sequence spans 228 residues: SPbeta prophage-derived uncharacterized protein YomL (228 aa).

The signal sequence occupies residues methionine 1–alanine 28.

In Bacillus subtilis (strain 168), this protein is SPbeta prophage-derived uncharacterized protein YomL (yomL).